We begin with the raw amino-acid sequence, 320 residues long: Arginine/serine-rich protein 1 (320 aa).

The segment covering 1 to 22 (MKTEASPGRLHEDVKLIFDKKA) has biased composition (basic and acidic residues). 2 disordered regions span residues 1 to 180 (MKTE…SRER) and 215 to 299 (LKEM…ADIV). Composition is skewed to low complexity over residues 24–48 (SGRS…SRGS) and 56–74 (TSSS…SNSR). Basic residues-rich tracts occupy residues 75-102 (SRSR…RARS), 114-158 (RRRH…RYRC), and 166-175 (RSPRPYRSRS). Residues Ser135 and Ser137 each carry the phosphoserine modification. A compositionally biased stretch (basic and acidic residues) spans 215-238 (LKEMEQQEERKRRSSSDEEERVRV). Residues 271 to 293 (VFSNNNAIAKPSSSPTLSDSKVT) are compositionally biased toward polar residues.

The protein belongs to the RSRP family. In terms of processing, phosphorylated. Phosphorylation at Ser-135 and Ser-137 mediates the interaction with spliceosome proteins.

The protein localises to the nucleus. In terms of biological role, probably acts as a spliceosomal factor that contributes to spliceosome assembly and regulates the isoform switching of proteins such as PARP6. The polypeptide is Arginine/serine-rich protein 1 (rsrp1) (Danio rerio (Zebrafish)).